We begin with the raw amino-acid sequence, 85 residues long: Teretoxin Tan9.6 (85 aa).

A signal peptide spans 1–21 (MMSKTGALLLTFMILVLFSMA). A propeptide spanning residues 22 to 52 (AADALGERFEDHEQKIREQDAGVGLLSLMGR) is cleaved from the precursor.

In terms of processing, contains 3 disulfide bonds. In terms of tissue distribution, expressed by the venom duct.

It is found in the secreted. This chain is Teretoxin Tan9.6, found in Terebra anilis (Auger snail).